A 553-amino-acid chain; its full sequence is 5'-nucleotidase (553 aa).

Positions 1–21 (MKQRLIVKTALSAAILATLAG) are cleaved as a signal peptide. Cys22 carries the N-palmitoyl cysteine lipid modification. Cys22 carries S-diacylglycerol cysteine lipidation. The a divalent metal cation site is built by Asp45, His47, Asp88, Asn120, His221, His256, and Gln258. Residues Phe432 and 501-507 (YNAAGGD) contribute to the substrate site.

Belongs to the 5'-nucleotidase family. Chloride is required as a cofactor. Requires Mg(2+) as cofactor.

The protein resides in the cell outer membrane. The catalysed reaction is a ribonucleoside 5'-phosphate + H2O = a ribonucleoside + phosphate. Functionally, degradation of extracellular 5'-nucleotides for nutritional needs. In Vibrio vulnificus (strain CMCP6), this protein is 5'-nucleotidase (nutA).